A 137-amino-acid polypeptide reads, in one-letter code: Protein archease (137 aa).

Ca(2+) contacts are provided by Asp-11, Asp-136, and Ile-137.

This sequence belongs to the archease family.

Its function is as follows. Activates the tRNA-splicing ligase complex by facilitating the enzymatic turnover of catalytic subunit RtcB. Acts by promoting the guanylylation of RtcB, a key intermediate step in tRNA ligation. Can also alter the NTP specificity of RtcB such that ATP, dGTP or ITP is used efficiently. The protein is Protein archease of Archaeoglobus fulgidus (strain ATCC 49558 / DSM 4304 / JCM 9628 / NBRC 100126 / VC-16).